The chain runs to 262 residues: Pyridoxine 5'-phosphate synthase (262 aa).

N6 is a 3-amino-2-oxopropyl phosphate binding site. Residue 8 to 9 participates in 1-deoxy-D-xylulose 5-phosphate binding; sequence DH. A 3-amino-2-oxopropyl phosphate-binding site is contributed by R17. H43 serves as the catalytic Proton acceptor. R45 and H50 together coordinate 1-deoxy-D-xylulose 5-phosphate. Residue E70 is the Proton acceptor of the active site. T102 contributes to the 1-deoxy-D-xylulose 5-phosphate binding site. The Proton donor role is filled by H215. 3-amino-2-oxopropyl phosphate is bound by residues G216 and 237–238; that span reads GH.

The protein belongs to the PNP synthase family. As to quaternary structure, homooctamer; tetramer of dimers.

The protein localises to the cytoplasm. It carries out the reaction 3-amino-2-oxopropyl phosphate + 1-deoxy-D-xylulose 5-phosphate = pyridoxine 5'-phosphate + phosphate + 2 H2O + H(+). It functions in the pathway cofactor biosynthesis; pyridoxine 5'-phosphate biosynthesis; pyridoxine 5'-phosphate from D-erythrose 4-phosphate: step 5/5. In terms of biological role, catalyzes the complicated ring closure reaction between the two acyclic compounds 1-deoxy-D-xylulose-5-phosphate (DXP) and 3-amino-2-oxopropyl phosphate (1-amino-acetone-3-phosphate or AAP) to form pyridoxine 5'-phosphate (PNP) and inorganic phosphate. This is Pyridoxine 5'-phosphate synthase from Helicobacter pylori (strain Shi470).